Reading from the N-terminus, the 98-residue chain is NADH-ubiquinone oxidoreductase chain 4L (98 aa).

A run of 3 helical transmembrane segments spans residues 1 to 21 (MPVIYINLIAAFFMAFMGLLI), 29 to 49 (SLLCLEGMMLSLFILNSTLAL), and 61 to 81 (IILLVFAACEAALGLSLLVMV).

The protein belongs to the complex I subunit 4L family. Core subunit of respiratory chain NADH dehydrogenase (Complex I) which is composed of 45 different subunits.

The protein localises to the mitochondrion inner membrane. The enzyme catalyses a ubiquinone + NADH + 5 H(+)(in) = a ubiquinol + NAD(+) + 4 H(+)(out). In terms of biological role, core subunit of the mitochondrial membrane respiratory chain NADH dehydrogenase (Complex I) which catalyzes electron transfer from NADH through the respiratory chain, using ubiquinone as an electron acceptor. Part of the enzyme membrane arm which is embedded in the lipid bilayer and involved in proton translocation. The protein is NADH-ubiquinone oxidoreductase chain 4L (MT-ND4L) of Echinops telfairi (Lesser hedgehog tenrec).